Reading from the N-terminus, the 736-residue chain is DNA topoisomerase 1 (736 aa).

Residues 2 to 113 form the Toprim domain; it reads KHLIIVESPA…SYPRIVFHEI (112 aa). Residues Glu8 and Asp82 each contribute to the Mg(2+) site. A Topo IA-type catalytic domain is found at 129 to 552; it reads DMFKVNAQQA…DFYYPFMDKI (424 aa). The interval 163 to 168 is interaction with DNA; that stretch reads SAGRVQ. Tyr297 serves as the catalytic O-(5'-phospho-DNA)-tyrosine intermediate. 4 consecutive C4-type zinc fingers follow at residues 572–598, 616–642, 663–689, and 702–725; these read CPKC…YPKC, CEKC…YPEC, CPEC…YPKC, and CEKC…CIQC.

The protein belongs to the type IA topoisomerase family. In terms of assembly, monomer. Requires Mg(2+) as cofactor.

It carries out the reaction ATP-independent breakage of single-stranded DNA, followed by passage and rejoining.. Functionally, releases the supercoiling and torsional tension of DNA, which is introduced during the DNA replication and transcription, by transiently cleaving and rejoining one strand of the DNA duplex. Introduces a single-strand break via transesterification at a target site in duplex DNA. The scissile phosphodiester is attacked by the catalytic tyrosine of the enzyme, resulting in the formation of a DNA-(5'-phosphotyrosyl)-enzyme intermediate and the expulsion of a 3'-OH DNA strand. The free DNA strand then undergoes passage around the unbroken strand, thus removing DNA supercoils. Finally, in the religation step, the DNA 3'-OH attacks the covalent intermediate to expel the active-site tyrosine and restore the DNA phosphodiester backbone. In Helicobacter pylori (strain J99 / ATCC 700824) (Campylobacter pylori J99), this protein is DNA topoisomerase 1.